Reading from the N-terminus, the 495-residue chain is Ribosome biogenesis protein YTM1 (495 aa).

Residues 15-97 (VKVIFTTTEP…ETTLTLQYVR (83 aa)) form a ubiquitin-like (UBL) domain region. WD repeat units lie at residues 129–168 (WSSA…IATS), 175–213 (GHTA…HFTG), 223–262 (GHTG…APEP), 264–295 (ASLL…LWSI), 296–337 (HTAP…STLT), 386–426 (GHAN…PATK), and 458–495 (GDGC…TEQK).

This sequence belongs to the WD repeat WDR12/YTM1 family. Component of the NOP7 complex, composed of ERB1, NOP7 and YTM1. The complex is held together by ERB1, which interacts with NOP7 via its N-terminal domain and with YTM1 via a high-affinity interaction between the seven-bladed beta-propeller domains of the 2 proteins. The NOP7 complex associates with the 66S pre-ribosome. Interacts (via UBL domain) with MDN1 (via VWFA/MIDAS domain).

The protein localises to the nucleus. It localises to the nucleolus. Its subcellular location is the nucleoplasm. Component of the NOP7 complex, which is required for maturation of the 25S and 5.8S ribosomal RNAs and formation of the 60S ribosome. The sequence is that of Ribosome biogenesis protein YTM1 from Chaetomium thermophilum (strain DSM 1495 / CBS 144.50 / IMI 039719) (Thermochaetoides thermophila).